We begin with the raw amino-acid sequence, 833 residues long: Leucine--tRNA ligase (833 aa).

The 'HIGH' region motif lies at 41 to 52; sequence PYPSGAGLHVGH. The 'KMSKS' region motif lies at 610–614; it reads KMSKS. K613 lines the ATP pocket.

It belongs to the class-I aminoacyl-tRNA synthetase family.

It localises to the cytoplasm. The catalysed reaction is tRNA(Leu) + L-leucine + ATP = L-leucyl-tRNA(Leu) + AMP + diphosphate. The polypeptide is Leucine--tRNA ligase (Streptococcus equi subsp. zooepidemicus (strain MGCS10565)).